The sequence spans 97 residues: Sugar transporter SemiSWEET (97 aa).

Residues 4–70 (IERIGKALEP…IYGIYHKNPT (67 aa)) enclose the PQ-loop domain. Helical transmembrane passes span 15–35 (MLVM…KLYV), 44–65 (LSLT…YGIY), and 71–91 (IWVG…GIIA).

As to quaternary structure, homodimer.

Its subcellular location is the cell membrane. Its function is as follows. The homodimer mediates transmembrane sugar transport down a concentration gradient. Transport is probably effected by rocking-type movements, where a cargo-binding cavity opens first on one and then on the other side of the membrane. This Vibrio sp. (strain N418) protein is Sugar transporter SemiSWEET.